A 108-amino-acid chain; its full sequence is Large ribosomal subunit protein eL30 (108 aa).

This sequence belongs to the eukaryotic ribosomal protein eL30 family.

The protein is Large ribosomal subunit protein eL30 (rpl30e) of Saccharolobus solfataricus (strain ATCC 35092 / DSM 1617 / JCM 11322 / P2) (Sulfolobus solfataricus).